The primary structure comprises 402 residues: Protein FAM221B (402 aa).

Positions 1 to 35 (MEAHEIIEEPHITMDAEKHPPSKDPSAEDLQENHI) are enriched in basic and acidic residues. 2 disordered regions span residues 1-205 (MEAH…TARP) and 378-402 (DTQKTRQRGGRPRGTDTVSNWHRPL). 2 stretches are compositionally biased toward polar residues: residues 77 to 90 (EPSISETPSETPTY) and 393 to 402 (DTVSNWHRPL).

It belongs to the FAM221 family.

This is Protein FAM221B (FAM221B) from Homo sapiens (Human).